A 155-amino-acid chain; its full sequence is Fibroblast growth factor 1 (155 aa).

Position 2 is an N-acetylalanine (alanine 2). The propeptide occupies 2–15; sequence AEGEITTFTALTEK. Residues 24-27 carry the Nuclear localization signal motif; sequence KKPK. A heparin-binding site is contributed by asparagine 33. The heparin-binding stretch occupies residues 127–143; sequence KKNGSCKRGPRTHYGQK.

This sequence belongs to the heparin-binding growth factors family. Monomer. Homodimer. Interacts with FGFR1, FGFR2, FGFR3 and FGFR4. Affinity between fibroblast growth factors (FGFs) and their receptors is increased by heparan sulfate glycosaminoglycans that function as coreceptors. Found in a complex with FGFBP1, FGF1 and FGF2. Interacts with FGFBP1. Part of a Cu(2+)-dependent multiprotein aggregate containing FGF1, S100A13 and SYT1. Interacts with SYT1. Interacts with S100A13. Interacts with LRRC59. Interacts with CSNKA, CSNKB and FIBP. While binding with LRRC59, CSNKA and FIBP seem mutually exclusive, CSNKB and FIBP may cooperatively interact with FGF1. Forms a ternary complex with FGFR1 and ITGAV:ITGB3 and induces the recruitment of PTPN11 to the complex. Post-translationally, in the nucleus, phosphorylated by PKC/PRKCD. Predominantly expressed in kidney and brain. Detected at much lower levels in heart and skeletal muscle.

It is found in the secreted. It localises to the cytoplasm. Its subcellular location is the cell cortex. The protein resides in the cytosol. The protein localises to the nucleus. Functionally, plays an important role in the regulation of cell survival, cell division, angiogenesis, cell differentiation and cell migration. Functions as a potent mitogen in vitro. Acts as a ligand for FGFR1 and integrins. Binds to FGFR1 in the presence of heparin leading to FGFR1 dimerization and activation via sequential autophosphorylation on tyrosine residues which act as docking sites for interacting proteins, leading to the activation of several signaling cascades. Binds to integrin ITGAV:ITGB3. Its binding to integrin, subsequent ternary complex formation with integrin and FGFR1, and the recruitment of PTPN11 to the complex are essential for FGF1 signaling. Induces the phosphorylation and activation of FGFR1, FRS2, MAPK3/ERK1, MAPK1/ERK2 and AKT1. Can induce angiogenesis. The protein is Fibroblast growth factor 1 (FGF1) of Homo sapiens (Human).